A 144-amino-acid chain; its full sequence is Large ribosomal subunit protein uL16 (144 aa).

Belongs to the universal ribosomal protein uL16 family. Part of the 50S ribosomal subunit.

In terms of biological role, binds 23S rRNA and is also seen to make contacts with the A and possibly P site tRNAs. The protein is Large ribosomal subunit protein uL16 of Thermoanaerobacter sp. (strain X514).